A 33-amino-acid polypeptide reads, in one-letter code: GIMDTLKNLAKTAGKGALQSLLNKASCKLSGQC.

A disulfide bridge connects residues Cys27 and Cys33.

Belongs to the frog skin active peptide (FSAP) family. Brevinin subfamily. Expressed by the skin glands.

The protein resides in the secreted. In terms of biological role, shows antibacterial activity against representative Gram-negative and Gram-positive bacterial species, and hemolytic activity. This is Brevinin-2E from Pelophylax lessonae (Pool frog).